A 207-amino-acid polypeptide reads, in one-letter code: Probable GTP-binding protein EngB (207 aa).

The EngB-type G domain maps to 25 to 202 (DVPEIAFVGR…ATLLWQWAHP (178 aa)). Residues 33-40 (GRSNAGKS), 60-64 (GRTQH), 82-85 (DLPG), 152-155 (TKAD), and 181-183 (FSA) contribute to the GTP site. Residues S40 and T62 each coordinate Mg(2+).

This sequence belongs to the TRAFAC class TrmE-Era-EngA-EngB-Septin-like GTPase superfamily. EngB GTPase family. Requires Mg(2+) as cofactor.

In terms of biological role, necessary for normal cell division and for the maintenance of normal septation. The chain is Probable GTP-binding protein EngB from Albidiferax ferrireducens (strain ATCC BAA-621 / DSM 15236 / T118) (Rhodoferax ferrireducens).